A 578-amino-acid chain; its full sequence is Phosphoenolpyruvate-protein phosphotransferase (578 aa).

Residue His-195 is the Tele-phosphohistidine intermediate of the active site. Phosphoenolpyruvate-binding residues include Arg-302 and Arg-338. Positions 437 and 461 each coordinate Mg(2+). Phosphoenolpyruvate-binding positions include 460–461 (ND) and Arg-471. The active-site Proton donor is the Cys-508.

It belongs to the PEP-utilizing enzyme family. As to quaternary structure, homodimer. Mg(2+) serves as cofactor.

The protein localises to the cytoplasm. The catalysed reaction is L-histidyl-[protein] + phosphoenolpyruvate = N(pros)-phospho-L-histidyl-[protein] + pyruvate. Functionally, general (non sugar-specific) component of the phosphoenolpyruvate-dependent sugar phosphotransferase system (sugar PTS). This major carbohydrate active-transport system catalyzes the phosphorylation of incoming sugar substrates concomitantly with their translocation across the cell membrane. Enzyme I transfers the phosphoryl group from phosphoenolpyruvate (PEP) to the phosphoryl carrier protein (HPr). The protein is Phosphoenolpyruvate-protein phosphotransferase (ptsI) of Bacillus sp. (strain S).